Reading from the N-terminus, the 282-residue chain is sn-glycerol-3-phosphate transport system permease protein UgpE (282 aa).

6 consecutive transmembrane segments (helical) span residues 14–34 (LILI…FVAS), 86–106 (MAIA…IVFF), 112–132 (MFFF…RILP), 146–168 (YAGL…QFFL), 201–221 (IAAL…WPLL), and 248–268 (WNYV…VVVL). In terms of domain architecture, ABC transmembrane type-1 spans 78–269 (LWNSFVVAMA…IPLILVVVLM (192 aa)).

The protein belongs to the binding-protein-dependent transport system permease family. The complex is composed of two ATP-binding proteins (UgpC), two transmembrane proteins (UgpA and UgpE) and a solute-binding protein (UgpB).

It localises to the cell inner membrane. Part of the ABC transporter complex UgpBAEC involved in sn-glycerol-3-phosphate (G3P) import. Probably responsible for the translocation of the substrate across the membrane. In Brucella abortus (strain 2308), this protein is sn-glycerol-3-phosphate transport system permease protein UgpE (ugpE).